Here is a 172-residue protein sequence, read N- to C-terminus: Centrin-2 (172 aa).

A disordered region spans residues 1–30; that stretch reads MASNFKKANMASSSQRKRMSPKPELTEEQK. A2 bears the N-acetylalanine mark. A required for self-assembly region spans residues 2–25; it reads ASNFKKANMASSSQRKRMSPKPEL. Residue S20 is modified to Phosphoserine. K22 is covalently cross-linked (Glycyl lysine isopeptide (Lys-Gly) (interchain with G-Cter in SUMO2)). T26 is subject to Phosphothreonine. EF-hand domains are found at residues 28-63, 64-99, 101-136, and 137-172; these read EQKQ…LGFE, PKKE…KMSE, DTKE…LGEN, and LTDE…TSLY. Residues D41, D43, T45, T47, and E52 each contribute to the Ca(2+) site. Residues D150, D152, D154, E156, and E161 each coordinate Ca(2+).

Belongs to the centrin family. Monomer. Homooligomer. Interacts with SFI1. Interacts with CCP110. Component of the XPC complex composed of XPC, RAD23B and CETN2. Component of the nuclear pore complex (NPC)-associated TREX-2 complex (transcription and export complex 2), composed of at least GANP, 2 copies of ENY2, PCID2, SEM1/DSS1, and either centrin CETN2 or centrin CETN3. The TREX-2 complex also associates with ALYREF/ALY and with the nucleoporin NUP153. Interacts with USP49. Forms a microtubule-associated complex with POC5, POC1B and FAM161A. Interacts with CCDC15.

The protein resides in the cytoplasm. It is found in the cytoskeleton. The protein localises to the microtubule organizing center. It localises to the centrosome. Its subcellular location is the centriole. The protein resides in the nucleus envelope. It is found in the nucleus. The protein localises to the nuclear pore complex. Its function is as follows. Plays a fundamental role in microtubule organizing center structure and function. Required for centriole duplication and correct spindle formation. Has a role in regulating cytokinesis and genome stability via cooperation with CALM1 and CCP110. Functionally, involved in global genome nucleotide excision repair (GG-NER) by acting as component of the XPC complex. Cooperatively with RAD23B appears to stabilize XPC. In vitro, stimulates DNA binding of the XPC:RAD23B dimer. In terms of biological role, the XPC complex is proposed to represent the first factor bound at the sites of DNA damage and together with other core recognition factors, XPA, RPA and the TFIIH complex, is part of the pre-incision (or initial recognition) complex. The XPC complex recognizes a wide spectrum of damaged DNA characterized by distortions of the DNA helix such as single-stranded loops, mismatched bubbles or single-stranded overhangs. The orientation of XPC complex binding appears to be crucial for inducing a productive NER. XPC complex is proposed to recognize and to interact with unpaired bases on the undamaged DNA strand which is followed by recruitment of the TFIIH complex and subsequent scanning for lesions in the opposite strand in a 5'-to-3' direction by the NER machinery. Cyclobutane pyrimidine dimers (CPDs) which are formed upon UV-induced DNA damage esacpe detection by the XPC complex due to a low degree of structural perurbation. Instead they are detected by the UV-DDB complex which in turn recruits and cooperates with the XPC complex in the respective DNA repair. As a component of the TREX-2 complex, involved in the export of mRNAs to the cytoplasm through the nuclear pores. The polypeptide is Centrin-2 (CETN2) (Homo sapiens (Human)).